The sequence spans 136 residues: MSLTLRVLAPDKSVFDDTVEEVILPSTTGLLGILPGHISMVTAIDIGVLKLRSSNGNWDSIALMGGFAEVESDDVTVLVNAAELGKSIDKATAEKEFEQAKAALNKLEDQAGNSADKLKAKESLNKARARSQAVGE.

The disordered stretch occupies residues 112-136; the sequence is GNSADKLKAKESLNKARARSQAVGE. Basic and acidic residues predominate over residues 116-125; the sequence is DKLKAKESLN.

It belongs to the ATPase epsilon chain family. In terms of assembly, F-type ATPases have 2 components, CF(1) - the catalytic core - and CF(0) - the membrane proton channel. CF(1) has five subunits: alpha(3), beta(3), gamma(1), delta(1), epsilon(1). CF(0) has three main subunits: a, b and c.

It localises to the cellular thylakoid membrane. Functionally, produces ATP from ADP in the presence of a proton gradient across the membrane. The protein is ATP synthase epsilon chain of Prochlorococcus marinus (strain SARG / CCMP1375 / SS120).